A 472-amino-acid chain; its full sequence is MNGDVQSVIRGYLERAQVAKTMSDAGRWNEAGDLLRQLMTDVKSCKISASNRDEHDARNTFLRALEANLKLVQQNVRDEDDLHEAMTRQSGSPEPPADPDVWSKPSPPLPSSSKFGATKKGVGAAGPRPREISKSTSSMSTNPADVKPANPTQGILPQNSAGDSFDASAYDAYIVQAVRGTMATNTENTMSLDDIIGMHDVKQVLHEAVTLPLLVPEFFQGLRSPWKAMVLAGPPGTGKTLIARAIASESSSTFFTVSSTDLSSKWRGDSEKIVRLLFELARFYAPSIIFIDEIDTLGGQRGNSGEHEASRRVKSEFLVQMDGSQNKFDSRRVFVLAATNIPWELDEALRRRFEKRIFIPLPDIDARKKLIEKSMEGTPKSDEINYDDLAARTEGFSGADVVSLCRTAAINVLRRYDTKSLRGGELTAAMESLKAELVRNIDFEAALQAVSPSAGPDTMLKCKEWCDSFGAM.

The interval 83–161 (HEAMTRQSGS…TQGILPQNSA (79 aa)) is disordered. A Phosphoserine; by mbk-2 modification is found at Ser92. Composition is skewed to polar residues over residues 134-143 (KSTSSMSTNP) and 150-161 (NPTQGILPQNSA). ATP contacts are provided by residues 233–240 (GPPGTGKT) and 351–352 (RR).

It belongs to the AAA ATPase family. Katanin p60 subunit A1 subfamily. In terms of assembly, homohexamer; ATP hydrolysis initiates a cycle between an open spiral and a closed ring conformation which is probably involved in pulling tubulin dimers out from microtubules. Interacts with mei-2, which may serve as a targeting subunit. Interacts with mel-26, which targets mei-1 for ubiquitin mediated proteolysis. Interacts with phosphatase pph-4.1. Post-translationally, phosphorylated. Phosphorylation by mbk-2 is required for its rapid degradation following meiosis II. Likely dephosphorylated by the PP4 complex composed of catalytic subunit pph-4.1 and regulatory subunit ppfr-1. Polyubiquitination targets the protein for rapid degradation via the ubiquitin system at the end of meiosis. The BTB domain protein mel-26 may serve to specifically target mei-1 for ubiquitination by cul-3 containing complexes. The cul-3 protein is in turn regulated by neddylation by ned-8.

Its subcellular location is the cytoplasm. The protein localises to the cytoskeleton. The protein resides in the spindle pole. It localises to the chromosome. The enzyme catalyses n ATP + n H2O + a microtubule = n ADP + n phosphate + (n+1) alpha/beta tubulin heterodimers.. Its activity is regulated as follows. ATPase activity is stimulated by microtubules, which promote homooligomerization. ATP-dependent microtubule severing is stimulated by interaction with mei-2. In terms of biological role, catalytic subunit of a complex which severs microtubules in an ATP-dependent manner. Microtubule severing may promote rapid reorganization of cellular microtubule arrays. Required specifically for meiotic spindle formation in the female germline; the presence of this protein is inimical to the formation of mitotic spindles. In body wall muscles, regulates organization of myosin thick filaments. In Caenorhabditis elegans, this protein is Meiotic spindle formation protein mei-1.